A 97-amino-acid polypeptide reads, in one-letter code: Conotoxin Cal6.1a (97 aa).

Residues 1–22 form the signal peptide; that stretch reads MKLTTVLVVALLVLAACQFTVT. Positions 23 to 46 are disordered; the sequence is DNSGDDPENPSLRSVGENQNPDST. A propeptide spanning residues 23-68 is cleaved from the precursor; it reads DNSGDDPENPSLRSVGENQNPDSTKTITAWATRDMTNMRRGLNRPS. Disulfide bonds link C71-C87, C78-C91, and C86-C96.

The protein belongs to the conotoxin O1 superfamily. In terms of tissue distribution, expressed by the venom duct.

The protein resides in the secreted. In terms of biological role, probable neurotoxin with unknown target. Possibly targets ion channels. The sequence is that of Conotoxin Cal6.1a from Californiconus californicus (California cone).